Reading from the N-terminus, the 428-residue chain is Adenylosuccinate synthetase (428 aa).

Residues 11 to 17 (GDEGKGK) and 39 to 41 (GHT) each bind GTP. Asp12 acts as the Proton acceptor in catalysis. Mg(2+) contacts are provided by Asp12 and Gly39. IMP is bound by residues 12-15 (DEGK), 37-40 (NAGH), Thr130, Arg144, Asn226, Thr241, and Arg305. Residue His40 is the Proton donor of the active site. Residue 301–307 (VTTGRKR) participates in substrate binding. GTP-binding positions include Arg307, 333-335 (KLD), and 415-417 (GTG).

It belongs to the adenylosuccinate synthetase family. Homodimer. It depends on Mg(2+) as a cofactor.

It localises to the cytoplasm. It carries out the reaction IMP + L-aspartate + GTP = N(6)-(1,2-dicarboxyethyl)-AMP + GDP + phosphate + 2 H(+). The protein operates within purine metabolism; AMP biosynthesis via de novo pathway; AMP from IMP: step 1/2. Functionally, plays an important role in the de novo pathway and in the salvage pathway of purine nucleotide biosynthesis. Catalyzes the first committed step in the biosynthesis of AMP from IMP. The sequence is that of Adenylosuccinate synthetase from Komagataella phaffii (strain GS115 / ATCC 20864) (Yeast).